The sequence spans 66 residues: UPF0457 protein BA_2525/GBAA_2525/BAS2348 (66 aa).

It belongs to the UPF0457 family.

In Bacillus anthracis, this protein is UPF0457 protein BA_2525/GBAA_2525/BAS2348.